Consider the following 401-residue polypeptide: Flagellin D (401 aa).

The protein belongs to the bacterial flagellin family.

It localises to the secreted. The protein localises to the bacterial flagellum. Its function is as follows. Flagellin is the subunit protein which polymerizes to form the filaments of bacterial flagella. In Rhizobium meliloti (strain 1021) (Ensifer meliloti), this protein is Flagellin D (flaD).